The chain runs to 102 residues: Secreted RxLR effector protein 61 (102 aa).

The first 22 residues, 1 to 22 (MAFQLRIVQHLLHITFLRLPLA), serve as a signal peptide directing secretion. The RxLR-dEER motif lies at 51–60 (RRLRQLNEHR).

Belongs to the RxLR effector family.

Its subcellular location is the secreted. It localises to the host chloroplast envelope. The protein localises to the host cytoplasm. The protein resides in the host nucleus. Functionally, effector that partially suppresses the tobacco programmed cell death induced by cell death-inducing proteins. This chain is Secreted RxLR effector protein 61, found in Plasmopara viticola (Downy mildew of grapevine).